A 121-amino-acid polypeptide reads, in one-letter code: Basic phospholipase A2 homolog textilotoxin B chain (121 aa).

7 disulfides stabilise this stretch: Cys11/Cys72, Cys27/Cys120, Cys29/Cys45, Cys44/Cys101, Cys51/Cys94, Cys61/Cys87, and Cys80/Cys92.

This sequence belongs to the phospholipase A2 family. Group I subfamily. N49 sub-subfamily. Heterohexamer. 2 forms exist: 2 A or 2 B chains, 2 C chains and 2 covalently-linked D chains, and 1 A or 1 B, 1 C, 2 covalently-linked D chains and 2 differentially glycosylated covalently-linked D chains. Textilotoxin was originally described as pentameric. As to expression, expressed by the venom gland.

Its subcellular location is the secreted. Snake venom oligomeric phospholipase A2 that has potent presynaptic neurotoxicity. Chain B is not itself neurotoxic, but it is essential for the neurotoxicity of textilotoxin. Subunit B possesses a very low phospholipase activity. The polypeptide is Basic phospholipase A2 homolog textilotoxin B chain (Pseudonaja textilis (Eastern brown snake)).